The primary structure comprises 555 residues: Oxamate carbamoyltransferase subunit AllF (555 aa).

The protein belongs to the AllF family. In terms of assembly, the OXTCase is composed of 3 subunits, AllF, AllG and AllH. Mg(2+) is required as a cofactor.

It catalyses the reaction oxamate + carbamoyl phosphate = N-carbamoyl-2-oxoglycine + phosphate. Its pathway is nitrogen metabolism; (S)-allantoin degradation. Functionally, component of a carbamoyltransferase involved in the anaerobic nitrogen utilization via the assimilation of allantoin. Catalyzes the conversion of oxalurate (N-carbamoyl-2-oxoglycine) to oxamate and carbamoyl phosphate. The polypeptide is Oxamate carbamoyltransferase subunit AllF (Escherichia coli (strain K12)).